A 369-amino-acid chain; its full sequence is Glutamate 5-kinase (369 aa).

K8 contacts ATP. S49, D136, and N148 together coordinate substrate. ATP contacts are provided by residues 168–169 (TD) and 212–218 (TGGMMTK). The 79-residue stretch at 277–355 (TGKLYLDSGA…KEISTILGYV (79 aa)) folds into the PUA domain.

This sequence belongs to the glutamate 5-kinase family.

The protein localises to the cytoplasm. The enzyme catalyses L-glutamate + ATP = L-glutamyl 5-phosphate + ADP. It functions in the pathway amino-acid biosynthesis; L-proline biosynthesis; L-glutamate 5-semialdehyde from L-glutamate: step 1/2. Its function is as follows. Catalyzes the transfer of a phosphate group to glutamate to form L-glutamate 5-phosphate. This is Glutamate 5-kinase from Trichormus variabilis (strain ATCC 29413 / PCC 7937) (Anabaena variabilis).